The following is a 249-amino-acid chain: NAD kinase (249 aa).

Residue aspartate 45 is the Proton acceptor of the active site. Residues 45–46 (DG), arginine 50, 110–111 (NE), aspartate 138, and 149–154 (SGWGMS) contribute to the NAD(+) site.

This sequence belongs to the NAD kinase family. It depends on a divalent metal cation as a cofactor.

The protein resides in the cytoplasm. The enzyme catalyses NAD(+) + ATP = ADP + NADP(+) + H(+). Functionally, involved in the regulation of the intracellular balance of NAD and NADP, and is a key enzyme in the biosynthesis of NADP. Catalyzes specifically the phosphorylation on 2'-hydroxyl of the adenosine moiety of NAD to yield NADP. This chain is NAD kinase, found in Saccharolobus solfataricus (strain ATCC 35092 / DSM 1617 / JCM 11322 / P2) (Sulfolobus solfataricus).